We begin with the raw amino-acid sequence, 205 residues long: High frequency lysogenization protein HflD homolog (205 aa).

The protein belongs to the HflD family.

Its subcellular location is the cytoplasm. The protein localises to the cell inner membrane. The chain is High frequency lysogenization protein HflD homolog from Shewanella halifaxensis (strain HAW-EB4).